The chain runs to 348 residues: Flagellar P-ring protein (348 aa).

The first 16 residues, 1–16 (MRVLTIFLLFMTSIFA), serve as a signal peptide directing secretion.

This sequence belongs to the FlgI family. As to quaternary structure, the basal body constitutes a major portion of the flagellar organelle and consists of four rings (L,P,S, and M) mounted on a central rod.

The protein localises to the periplasm. It is found in the bacterial flagellum basal body. Functionally, assembles around the rod to form the L-ring and probably protects the motor/basal body from shearing forces during rotation. This Campylobacter jejuni subsp. doylei (strain ATCC BAA-1458 / RM4099 / 269.97) protein is Flagellar P-ring protein.